The sequence spans 542 residues: Carboxypeptidase Y (542 aa).

Positions 1-21 (MKLSKSTLIATLALTATSTNA) are cleaved as a signal peptide. Positions 22–127 (LVVQNPFSNI…DAQVPNHKLR (106 aa)) are excised as a propeptide. 5 cysteine pairs are disulfide-bonded: cysteine 182–cysteine 421, cysteine 316–cysteine 330, cysteine 340–cysteine 363, cysteine 347–cysteine 356, and cysteine 385–cysteine 391. Asparagine 213 is a glycosylation site (N-linked (GlcNAc...) asparagine). The active site involves serine 269. Asparagine 291 carries an N-linked (GlcNAc...) asparagine glycan. Aspartate 461 is an active-site residue. Cysteine 464 contacts substrate. Histidine 518 is an active-site residue. Methionine 519 is a binding site for substrate.

Belongs to the peptidase S10 family.

The protein resides in the vacuole. It carries out the reaction Release of a C-terminal amino acid with broad specificity.. Its function is as follows. Involved in degradation of small peptides. The chain is Carboxypeptidase Y (CPY1) from Candida albicans (Yeast).